The following is a 126-amino-acid chain: Aspartate 1-decarboxylase (126 aa).

The active-site Schiff-base intermediate with substrate; via pyruvic acid is the serine 25. Serine 25 is subject to Pyruvic acid (Ser). Threonine 57 contacts substrate. The active-site Proton donor is tyrosine 58. A substrate-binding site is contributed by 73–75; it reads GAA.

Belongs to the PanD family. Heterooctamer of four alpha and four beta subunits. Requires pyruvate as cofactor. Post-translationally, is synthesized initially as an inactive proenzyme, which is activated by self-cleavage at a specific serine bond to produce a beta-subunit with a hydroxyl group at its C-terminus and an alpha-subunit with a pyruvoyl group at its N-terminus.

The protein localises to the cytoplasm. The enzyme catalyses L-aspartate + H(+) = beta-alanine + CO2. It functions in the pathway cofactor biosynthesis; (R)-pantothenate biosynthesis; beta-alanine from L-aspartate: step 1/1. In terms of biological role, catalyzes the pyruvoyl-dependent decarboxylation of aspartate to produce beta-alanine. This chain is Aspartate 1-decarboxylase, found in Psychromonas ingrahamii (strain DSM 17664 / CCUG 51855 / 37).